We begin with the raw amino-acid sequence, 213 residues long: Orotate phosphoribosyltransferase (213 aa).

Lys26 provides a ligand contact to 5-phospho-alpha-D-ribose 1-diphosphate. 34 to 35 is a binding site for orotate; that stretch reads FF. 5-phospho-alpha-D-ribose 1-diphosphate contacts are provided by residues 72-73, Arg99, Lys100, Lys103, His105, and 124-132; these read YK and DDVITAGTA. 2 residues coordinate orotate: Thr128 and Arg156.

It belongs to the purine/pyrimidine phosphoribosyltransferase family. PyrE subfamily. In terms of assembly, homodimer. Requires Mg(2+) as cofactor.

It catalyses the reaction orotidine 5'-phosphate + diphosphate = orotate + 5-phospho-alpha-D-ribose 1-diphosphate. It functions in the pathway pyrimidine metabolism; UMP biosynthesis via de novo pathway; UMP from orotate: step 1/2. Functionally, catalyzes the transfer of a ribosyl phosphate group from 5-phosphoribose 1-diphosphate to orotate, leading to the formation of orotidine monophosphate (OMP). This is Orotate phosphoribosyltransferase from Vibrio parahaemolyticus serotype O3:K6 (strain RIMD 2210633).